The primary structure comprises 110 residues: Large ribosomal subunit protein uL22 (110 aa).

The protein belongs to the universal ribosomal protein uL22 family. As to quaternary structure, part of the 50S ribosomal subunit.

Its function is as follows. This protein binds specifically to 23S rRNA; its binding is stimulated by other ribosomal proteins, e.g. L4, L17, and L20. It is important during the early stages of 50S assembly. It makes multiple contacts with different domains of the 23S rRNA in the assembled 50S subunit and ribosome. The globular domain of the protein is located near the polypeptide exit tunnel on the outside of the subunit, while an extended beta-hairpin is found that lines the wall of the exit tunnel in the center of the 70S ribosome. The sequence is that of Large ribosomal subunit protein uL22 from Vibrio cholerae serotype O1 (strain ATCC 39541 / Classical Ogawa 395 / O395).